A 342-amino-acid polypeptide reads, in one-letter code: Dihydroorotate dehydrogenase (quinone) (342 aa).

Residues 65–69 (AGLDK) and threonine 89 each bind FMN. Lysine 69 lines the substrate pocket. 114–118 (NRMGF) is a substrate binding site. Residues asparagine 142 and asparagine 175 each coordinate FMN. Asparagine 175 lines the substrate pocket. Serine 178 serves as the catalytic Nucleophile. Residue asparagine 180 participates in substrate binding. Residues lysine 220 and threonine 248 each contribute to the FMN site. 249–250 (NT) contributes to the substrate binding site. FMN is bound by residues glycine 271, glycine 300, and 321-322 (YT).

Belongs to the dihydroorotate dehydrogenase family. Type 2 subfamily. In terms of assembly, monomer. It depends on FMN as a cofactor.

The protein resides in the cell membrane. The catalysed reaction is (S)-dihydroorotate + a quinone = orotate + a quinol. Its pathway is pyrimidine metabolism; UMP biosynthesis via de novo pathway; orotate from (S)-dihydroorotate (quinone route): step 1/1. Its function is as follows. Catalyzes the conversion of dihydroorotate to orotate with quinone as electron acceptor. The chain is Dihydroorotate dehydrogenase (quinone) from Burkholderia pseudomallei (strain K96243).